The chain runs to 511 residues: MSKRPVALIILDGFALREETYGNAVAQANKPNFDRYWNEYPHATLKACGEAVGLPEGQMGNSEVGHLNIGAGRIVYQSLTRVNIAIREGEFDRNETFLAAMNHVKQHGTSLHLFGLLSDGGVHSHIHHLYALLRLAAKEGVKRVYIHGFLDGRDVGPQTAPQYIKELQEKIKEYGVGEIATLSGRYYSMDRDKRWERVEKAYRAMVYGEGPTYRDPLECIEDSYKNGIYDEFVLPSVIVREDGSPVATIQDNDAIIFYNFRPDRAIQISNTFTNEDFREFDRGPKHPKNLFFVCLTHFSETVKGYVAFKPTNLDNTIGEVLSQHGLRQLRIAETEKYPHVTFFMSGGREEKFPGEDRILINSPKVATYDLKPEMSAYEVTEALLKEIAADKYDAIILNYANPDMVGHSGMLEPTIKAVEAVDECLGKVVDAILEKGGIAIITADHGNADEVLTPEGKPQTAHTTNPVPVIVTKHGIELRKDGILGDLAPTMLDLLGLPQPKEMTGKTLIVK.

Asp-12 is a Mn(2+) binding site. Tyr-36 is subject to Phosphotyrosine. Ser-62 is a binding site for Mn(2+). The active-site Phosphoserine intermediate is Ser-62. Residues His-123, 153–154, Arg-185, Arg-191, 261–264, and Lys-336 contribute to the substrate site; these read RD and RPDR. Mn(2+) contacts are provided by Asp-403, His-407, Asp-444, His-445, and His-462.

It belongs to the BPG-independent phosphoglycerate mutase family. Monomer. Mn(2+) is required as a cofactor.

It carries out the reaction (2R)-2-phosphoglycerate = (2R)-3-phosphoglycerate. The protein operates within carbohydrate degradation; glycolysis; pyruvate from D-glyceraldehyde 3-phosphate: step 3/5. Its function is as follows. Catalyzes the interconversion of 2-phosphoglycerate and 3-phosphoglycerate. The protein is 2,3-bisphosphoglycerate-independent phosphoglycerate mutase of Geobacillus thermodenitrificans (strain NG80-2).